Here is a 356-residue protein sequence, read N- to C-terminus: UDP-N-acetylglucosamine--N-acetylmuramyl-(pentapeptide) pyrophosphoryl-undecaprenol N-acetylglucosamine transferase (356 aa).

Residues 12–14 (TGG), Asn-124, Arg-163, Ser-188, Ile-242, 261–266 (ALTVSE), and Gln-287 each bind UDP-N-acetyl-alpha-D-glucosamine.

The protein belongs to the glycosyltransferase 28 family. MurG subfamily.

It is found in the cell inner membrane. The catalysed reaction is di-trans,octa-cis-undecaprenyl diphospho-N-acetyl-alpha-D-muramoyl-L-alanyl-D-glutamyl-meso-2,6-diaminopimeloyl-D-alanyl-D-alanine + UDP-N-acetyl-alpha-D-glucosamine = di-trans,octa-cis-undecaprenyl diphospho-[N-acetyl-alpha-D-glucosaminyl-(1-&gt;4)]-N-acetyl-alpha-D-muramoyl-L-alanyl-D-glutamyl-meso-2,6-diaminopimeloyl-D-alanyl-D-alanine + UDP + H(+). It participates in cell wall biogenesis; peptidoglycan biosynthesis. In terms of biological role, cell wall formation. Catalyzes the transfer of a GlcNAc subunit on undecaprenyl-pyrophosphoryl-MurNAc-pentapeptide (lipid intermediate I) to form undecaprenyl-pyrophosphoryl-MurNAc-(pentapeptide)GlcNAc (lipid intermediate II). The polypeptide is UDP-N-acetylglucosamine--N-acetylmuramyl-(pentapeptide) pyrophosphoryl-undecaprenol N-acetylglucosamine transferase (Pseudomonas fluorescens (strain ATCC BAA-477 / NRRL B-23932 / Pf-5)).